The following is a 361-amino-acid chain: Phosphoserine aminotransferase (361 aa).

An L-glutamate-binding site is contributed by Arg42. Pyridoxal 5'-phosphate-binding positions include 76 to 77, Trp102, Thr152, Asp172, and Gln195; that span reads AT. Lys196 carries the N6-(pyridoxal phosphate)lysine modification. Residue 237-238 participates in pyridoxal 5'-phosphate binding; sequence NT.

This sequence belongs to the class-V pyridoxal-phosphate-dependent aminotransferase family. SerC subfamily. As to quaternary structure, homodimer. The cofactor is pyridoxal 5'-phosphate.

The protein resides in the cytoplasm. It carries out the reaction O-phospho-L-serine + 2-oxoglutarate = 3-phosphooxypyruvate + L-glutamate. The catalysed reaction is 4-(phosphooxy)-L-threonine + 2-oxoglutarate = (R)-3-hydroxy-2-oxo-4-phosphooxybutanoate + L-glutamate. The protein operates within amino-acid biosynthesis; L-serine biosynthesis; L-serine from 3-phospho-D-glycerate: step 2/3. Its pathway is cofactor biosynthesis; pyridoxine 5'-phosphate biosynthesis; pyridoxine 5'-phosphate from D-erythrose 4-phosphate: step 3/5. In terms of biological role, catalyzes the reversible conversion of 3-phosphohydroxypyruvate to phosphoserine and of 3-hydroxy-2-oxo-4-phosphonooxybutanoate to phosphohydroxythreonine. In Xanthomonas campestris pv. campestris (strain B100), this protein is Phosphoserine aminotransferase.